Reading from the N-terminus, the 414-residue chain is 3-oxoacyl-[acyl-carrier-protein] synthase 2 (414 aa).

The Ketosynthase family 3 (KS3) domain maps to Asn4–Lys411. Catalysis depends on for beta-ketoacyl synthase activity residues Cys165, His304, and His341.

Belongs to the thiolase-like superfamily. Beta-ketoacyl-ACP synthases family.

It carries out the reaction a fatty acyl-[ACP] + malonyl-[ACP] + H(+) = a 3-oxoacyl-[ACP] + holo-[ACP] + CO2. The catalysed reaction is (9Z)-hexadecenoyl-[ACP] + malonyl-[ACP] + H(+) = 3-oxo-(11Z)-octadecenoyl-[ACP] + holo-[ACP] + CO2. It functions in the pathway lipid metabolism; fatty acid biosynthesis. Functionally, involved in the type II fatty acid elongation cycle. Catalyzes the elongation of a wide range of acyl-ACP by the addition of two carbons from malonyl-ACP to an acyl acceptor. Can efficiently catalyze the conversion of palmitoleoyl-ACP (cis-hexadec-9-enoyl-ACP) to cis-vaccenoyl-ACP (cis-octadec-11-enoyl-ACP), an essential step in the thermal regulation of fatty acid composition. This chain is 3-oxoacyl-[acyl-carrier-protein] synthase 2 (fabF), found in Staphylococcus aureus (strain MRSA252).